Here is a 417-residue protein sequence, read N- to C-terminus: Phosphoglycerate kinase 1 (417 aa).

The residue at position 2 (serine 2) is an N-acetylserine. Phosphoserine occurs at positions 2 and 4. Lysine 6 carries the post-translational modification N6-succinyllysine. The residue at position 11 (lysine 11) is an N6-acetyllysine. (2R)-3-phosphoglycerate is bound by residues valine 23, aspartate 24, phenylalanine 25, asparagine 26, glutamine 38, arginine 39, serine 62, histidine 63, glycine 65, and arginine 66. The tract at residues 38–43 is mitochondrial targeting region exposed following cis-trans isomerization by PIN1 and recognized by the TOM complex for mitochondrial translocation of the protein; that stretch reads QRIKAA. N6-acetyllysine is present on lysine 75. At tyrosine 76 the chain carries Phosphotyrosine. 2 positions are modified to N6-acetyllysine: lysine 86 and lysine 91. Lysine 97 is subject to N6-(2-hydroxyisobutyryl)lysine; alternate. At lysine 97 the chain carries N6-acetyllysine; alternate. Positions 122 and 123 each coordinate (2R)-3-phosphoglycerate. The residue at position 131 (lysine 131) is an N6-acetyllysine; alternate. Lysine 131 is subject to N6-malonyllysine; alternate. Lysine 146 carries the N6-acetyllysine modification. Histidine 170 and arginine 171 together coordinate (2R)-3-phosphoglycerate. Position 191 is an N6-succinyllysine (lysine 191). Phosphotyrosine is present on tyrosine 196. The residue at position 199 (lysine 199) is an N6-acetyllysine. Serine 203 is subject to Phosphoserine. Glycine 214 serves as a coordination point for ADP. Glycine 214 provides a ligand contact to CDP. Residues alanine 215 and lysine 216 each contribute to the AMP site. An ATP-binding site is contributed by alanine 215. Alanine 215 is a Mg(2+) binding site. Lysine 216 is modified (N6-(2-hydroxyisobutyryl)lysine). Mg(2+)-binding residues include alanine 218 and aspartate 219. Aspartate 219 contributes to the CDP binding site. Lysine 220 is an AMP binding site. Lysine 220 provides a ligand contact to ATP. Lysine 220 is subject to N6-(2-hydroxyisobutyryl)lysine. Glycine 238 contacts ADP. Glycine 238 contacts CDP. Glycine 239 contributes to the AMP binding site. Position 239 (glycine 239) interacts with ATP. N6-acetyllysine occurs at positions 267 and 291. Glycine 313 contributes to the AMP binding site. Residue glycine 313 participates in ATP binding. Position 323 is an N6-(2-hydroxyisobutyryl)lysine (lysine 323). Residues glycine 338, valine 340, and phenylalanine 343 each coordinate CDP. Phenylalanine 343 is a binding site for ADP. Glutamate 344 provides a ligand contact to AMP. Residues glutamate 344, aspartate 375, and threonine 376 each coordinate ATP. Residue aspartate 375 participates in Mg(2+) binding.

The protein belongs to the phosphoglycerate kinase family. In terms of assembly, monomer. Interacts with kinase MAPK1/ERK2; the interaction is direct, occurs under hypoxic conditions, and promotes its interaction with PIN1. Interacts with peptidyl-prolyl cis-trans isomerase PIN1; the interaction is direct, occurs under hypoxic conditions, and targets the protein to the mitochondrion by promoting interactions with the TOM complex. Interacts with mitochondrial circRNA mcPGK1 (via its 2nd stem-loop); the interaction is direct and targets the protein to the mitochondrion by promoting interactions with the TOM complex. Interacts with pyruvate dehydrogenase kinase PDK1; the interaction is direct, occurs under hypoxic conditions and leads to PDK1-mediated inhibition of pyruvate dehydrogenase complex activity. Mg(2+) is required as a cofactor. In terms of processing, phosphorylated at Ser-203 by MAPK1/ERK2 under hypoxic conditions, which promotes its mitochondrial targeting.

It is found in the cytoplasm. The protein localises to the cytosol. It localises to the mitochondrion matrix. It carries out the reaction (2R)-3-phosphoglycerate + ATP = (2R)-3-phospho-glyceroyl phosphate + ADP. The catalysed reaction is L-seryl-[protein] + ATP = O-phospho-L-seryl-[protein] + ADP + H(+). Its pathway is carbohydrate degradation; glycolysis; pyruvate from D-glyceraldehyde 3-phosphate: step 2/5. Functionally, catalyzes one of the two ATP producing reactions in the glycolytic pathway via the reversible conversion of 1,3-diphosphoglycerate to 3-phosphoglycerate. Both L- and D- forms of purine and pyrimidine nucleotides can be used as substrates, but the activity is much lower on pyrimidines. In addition to its role as a glycolytic enzyme, it seems that PGK-1 acts as a polymerase alpha cofactor protein (primer recognition protein). Acts as a protein kinase when localized to the mitochondrion where it phosphorylates pyruvate dehydrogenase kinase PDK1 to inhibit pyruvate dehydrogenase complex activity and suppress the formation of acetyl-coenzyme A from pyruvate, and consequently inhibit oxidative phosphorylation and promote glycolysis. May play a role in sperm motility. The protein is Phosphoglycerate kinase 1 (PGK1) of Notamacropus eugenii (Tammar wallaby).